Here is a 735-residue protein sequence, read N- to C-terminus: Ribosomal RNA large subunit methyltransferase K/L (735 aa).

In terms of domain architecture, THUMP spans 45–156 (DGYRACLWSR…RDSLSFSLDL (112 aa)).

It belongs to the methyltransferase superfamily. RlmKL family.

The protein localises to the cytoplasm. The catalysed reaction is guanosine(2445) in 23S rRNA + S-adenosyl-L-methionine = N(2)-methylguanosine(2445) in 23S rRNA + S-adenosyl-L-homocysteine + H(+). It catalyses the reaction guanosine(2069) in 23S rRNA + S-adenosyl-L-methionine = N(2)-methylguanosine(2069) in 23S rRNA + S-adenosyl-L-homocysteine + H(+). Functionally, specifically methylates the guanine in position 2445 (m2G2445) and the guanine in position 2069 (m7G2069) of 23S rRNA. In Allochromatium vinosum (strain ATCC 17899 / DSM 180 / NBRC 103801 / NCIMB 10441 / D) (Chromatium vinosum), this protein is Ribosomal RNA large subunit methyltransferase K/L.